The chain runs to 588 residues: Serine/threonine-protein phosphatase 2A 65 kDa regulatory subunit A alpha isoform (588 aa).

HEAT repeat units follow at residues 2–42, 44–80, 81–119, 158–196, 197–235, 236–274, 275–313, 315–352, 353–391, 393–430, 432–469, 470–508, 509–547, and 549–586; these read AMVD…ALGE, RTRK…FVGG, IEFA…QMKE, DVLK…TVES, TFLI…LLEP, QDCV…AVGP, DCTR…LLNP, LAIQ…ILGK, DSTI…VIGI, LLSQ…QLGI, FFDD…EFGP, EWAM…VMGS, EITC…IVDQ, and VVDK…STAA.

This sequence belongs to the phosphatase 2A regulatory subunit A family. In terms of assembly, PP2A consists of a common heterodimeric core enzyme, composed of a 36 kDa catalytic subunit (subunit C) and a 65 kDa constant regulatory subunit (subunit A), that associates with a variety of regulatory subunits such as subunits B (the R2/B/PR55/B55, R3/B''/PR72/PR130/PR59 and R5/B'/B56 families) and the regulatory subunits TON2. Interacts with CYP20-1/ROC7. Also interacts with phosphatidic acid (PA), a lipid signaling molecule. Interacts with CHIP. Interacts with SIC/RON3. Ubiquitinated. CHIP-mediated ubiquitination enhances phosphatase activity after an abiotic stress such as low temperature or darkness. In terms of tissue distribution, mostly expressed in cell-dividing tissues such as apical meristems. Ubiquitous, with higher levels in roots and flowers (at protein level).

It is found in the cytoplasm. The protein localises to the cytosol. It localises to the nucleus. In terms of biological role, the A subunit of protein phosphatase 2A serves as a scaffolding molecule to coordinate the assembly of the catalytic subunit and a variable regulatory B subunit. Seems to act as a positive regulator of PP2A catalytic activity. Confers resistance to phosphatase inhibitors such as okadaic acid and cantharidin. Involved during developmental process such as seedling and floral developments, root gravitropism, and stomatal opening regulation. Involved in the regulation of auxin efflux, especially during basipetal (tips to base) auxin transport in roots, and appears to contribute to the perception of auxin efflux inhibitors such as 1-N-naphthylphthalamic acid (NPA) and to semicarbazone I (substituted phenylsemicarbazone of 2-acetylarylcarboxylic acids) (SCB-I). Modulates the magnitude of ethylene response in the hypocotyl and stem, and functions as a general positive transducer of early ABA signaling. The holoenzyme composed of PP2AA1, PP2A4 and B'ZETA or B'ETA acts as a negative regulator of plant innate immunity by controlling BAK1 phosphorylation state and activation in surface-localized immune receptor complexes. The sequence is that of Serine/threonine-protein phosphatase 2A 65 kDa regulatory subunit A alpha isoform (PP2AA1) from Arabidopsis thaliana (Mouse-ear cress).